We begin with the raw amino-acid sequence, 354 residues long: DNA-binding protein EMBP-1 (354 aa).

Disordered stretches follow at residues 1 to 24 (MASSSSATSGDDRPPAAGGGTPAQ), 106 to 193 (SAAG…RSAS), and 230 to 273 (EVNA…RKQQ). Low complexity-rich tracts occupy residues 127 to 140 (SSSGSGDAGSQGSS) and 232 to 245 (NAAASSQSNASLSQ). Positions 246 to 265 (MDERELKRERRKQSNRESAR) are enriched in basic and acidic residues. In terms of domain architecture, bZIP spans 250 to 313 (ELKRERRKQS…KTMETENKKL (64 aa)). A basic motif region spans residues 252–271 (KRERRKQSNRESARRSRLRK). The segment at 278–299 (LAQKVSELTAANGTLRSELDQL) is leucine-zipper.

It belongs to the bZIP family. In terms of assembly, heterodimer.

The protein localises to the nucleus. Functionally, interacts specifically with the 8-bp sequence 5'-CACGTGGC-3'in the abscisic acid response element (ABARE). Also binds to the hexamer motif 5'-ACGTCA-3' of histone gene promoters. In Triticum aestivum (Wheat), this protein is DNA-binding protein EMBP-1.